Here is a 482-residue protein sequence, read N- to C-terminus: ATP synthase subunit beta (482 aa).

ATP is bound at residue 162-169 (GGAGVGKT).

In terms of assembly, F-type ATPases have 2 components, CF(1) - the catalytic core - and CF(0) - the membrane proton channel. CF(1) has five subunits: alpha(3), beta(3), gamma(1), delta(1), epsilon(1). CF(0) has four main subunits: a(1), b(1), b'(1) and c(9-12).

It is found in the cellular thylakoid membrane. It carries out the reaction ATP + H2O + 4 H(+)(in) = ADP + phosphate + 5 H(+)(out). With respect to regulation, inhibited by dicyclohexylcarbodiimide. Produces ATP from ADP in the presence of a proton gradient across the membrane. The catalytic sites are hosted primarily by the beta subunits. In terms of biological role, the complex from the organism is particularly stable to disruption and remains functional after 6 hrs at 55 degrees Celsius. In Thermosynechococcus vestitus (strain NIES-2133 / IAM M-273 / BP-1), this protein is ATP synthase subunit beta.